The chain runs to 316 residues: 4-hydroxy-3-methylbut-2-enyl diphosphate reductase (316 aa).

Cys12 is a binding site for [4Fe-4S] cluster. His41 and His74 together coordinate (2E)-4-hydroxy-3-methylbut-2-enyl diphosphate. Residues His41 and His74 each contribute to the dimethylallyl diphosphate site. Residues His41 and His74 each contribute to the isopentenyl diphosphate site. Cys96 lines the [4Fe-4S] cluster pocket. A (2E)-4-hydroxy-3-methylbut-2-enyl diphosphate-binding site is contributed by His124. His124 lines the dimethylallyl diphosphate pocket. An isopentenyl diphosphate-binding site is contributed by His124. Glu126 acts as the Proton donor in catalysis. Thr169 contributes to the (2E)-4-hydroxy-3-methylbut-2-enyl diphosphate binding site. Cys199 contributes to the [4Fe-4S] cluster binding site. Residues Ser227, Ser228, Asn229, and Ser271 each coordinate (2E)-4-hydroxy-3-methylbut-2-enyl diphosphate. Dimethylallyl diphosphate contacts are provided by Ser227, Ser228, Asn229, and Ser271. Isopentenyl diphosphate-binding residues include Ser227, Ser228, Asn229, and Ser271.

Belongs to the IspH family. It depends on [4Fe-4S] cluster as a cofactor.

The enzyme catalyses isopentenyl diphosphate + 2 oxidized [2Fe-2S]-[ferredoxin] + H2O = (2E)-4-hydroxy-3-methylbut-2-enyl diphosphate + 2 reduced [2Fe-2S]-[ferredoxin] + 2 H(+). It catalyses the reaction dimethylallyl diphosphate + 2 oxidized [2Fe-2S]-[ferredoxin] + H2O = (2E)-4-hydroxy-3-methylbut-2-enyl diphosphate + 2 reduced [2Fe-2S]-[ferredoxin] + 2 H(+). It participates in isoprenoid biosynthesis; dimethylallyl diphosphate biosynthesis; dimethylallyl diphosphate from (2E)-4-hydroxy-3-methylbutenyl diphosphate: step 1/1. The protein operates within isoprenoid biosynthesis; isopentenyl diphosphate biosynthesis via DXP pathway; isopentenyl diphosphate from 1-deoxy-D-xylulose 5-phosphate: step 6/6. Functionally, catalyzes the conversion of 1-hydroxy-2-methyl-2-(E)-butenyl 4-diphosphate (HMBPP) into a mixture of isopentenyl diphosphate (IPP) and dimethylallyl diphosphate (DMAPP). Acts in the terminal step of the DOXP/MEP pathway for isoprenoid precursor biosynthesis. This chain is 4-hydroxy-3-methylbut-2-enyl diphosphate reductase, found in Vibrio cholerae serotype O1 (strain ATCC 39315 / El Tor Inaba N16961).